We begin with the raw amino-acid sequence, 326 residues long: GTP 3',8-cyclase (326 aa).

The 223-residue stretch at glycine 5–serine 227 folds into the Radical SAM core domain. A GTP-binding site is contributed by arginine 14. [4Fe-4S] cluster is bound by residues cysteine 21 and cysteine 25. Position 27 (tyrosine 27) interacts with S-adenosyl-L-methionine. Cysteine 28 lines the [4Fe-4S] cluster pocket. Arginine 64 is a binding site for GTP. Position 68 (glycine 68) interacts with S-adenosyl-L-methionine. GTP is bound at residue threonine 95. An S-adenosyl-L-methionine-binding site is contributed by serine 119. Lysine 155 is a GTP binding site. Residue methionine 189 coordinates S-adenosyl-L-methionine. [4Fe-4S] cluster is bound by residues cysteine 250 and cysteine 253. Arginine 255–arginine 257 contacts GTP. Cysteine 267 lines the [4Fe-4S] cluster pocket.

The protein belongs to the radical SAM superfamily. MoaA family. Monomer and homodimer. [4Fe-4S] cluster serves as cofactor.

The enzyme catalyses GTP + AH2 + S-adenosyl-L-methionine = (8S)-3',8-cyclo-7,8-dihydroguanosine 5'-triphosphate + 5'-deoxyadenosine + L-methionine + A + H(+). The protein operates within cofactor biosynthesis; molybdopterin biosynthesis. Functionally, catalyzes the cyclization of GTP to (8S)-3',8-cyclo-7,8-dihydroguanosine 5'-triphosphate. The sequence is that of GTP 3',8-cyclase from Sulfurovum sp. (strain NBC37-1).